We begin with the raw amino-acid sequence, 354 residues long: UDP-3-O-acylglucosamine N-acyltransferase (354 aa).

His-257 acts as the Proton acceptor in catalysis.

This sequence belongs to the transferase hexapeptide repeat family. LpxD subfamily. In terms of assembly, homotrimer.

It catalyses the reaction a UDP-3-O-[(3R)-3-hydroxyacyl]-alpha-D-glucosamine + a (3R)-hydroxyacyl-[ACP] = a UDP-2-N,3-O-bis[(3R)-3-hydroxyacyl]-alpha-D-glucosamine + holo-[ACP] + H(+). It participates in bacterial outer membrane biogenesis; LPS lipid A biosynthesis. Catalyzes the N-acylation of UDP-3-O-acylglucosamine using 3-hydroxyacyl-ACP as the acyl donor. Is involved in the biosynthesis of lipid A, a phosphorylated glycolipid that anchors the lipopolysaccharide to the outer membrane of the cell. In Rhizobium johnstonii (strain DSM 114642 / LMG 32736 / 3841) (Rhizobium leguminosarum bv. viciae), this protein is UDP-3-O-acylglucosamine N-acyltransferase.